Here is a 752-residue protein sequence, read N- to C-terminus: MAISSTDRRSKNVQIFVEKDAVETSFAKWAQPGHFSRTLAKGPKTTTWIWNLHADAHDFDSQTSSLEEVSRKIFSAHFGQLSVIFLWISGMHFHGAYFSNYSAWLTDPVNIKQSSQVVWPIVGQEILNGDVGGNFQGIQTTSGWFQMWRAEGITSEVELYWIAIGGLAMSAIMLFAGWFHYHKAAPKLEWFQNAESMMNHHLAGLLGLGCLSWSGHQIHVALPINKLLDAGVAPQEIPLPHEFLINRELMSQLYPSFSKGLAPFFSGHWGEYSDFLTFKGGLNPVTGGLWLSDIAHHHLALAVLFIFAGHMYRTNWGIGHSMKEILEAHKGPFTGEGHKGLYEILTTSWHAQLAINLAMMGSLSIIVAHHMYAMPPYPYIATDYATQLSLFTHHMWIGGFCVTGGAAHAAIFMVRDYTPANNYNNLLDRVLRHRDSIIAHLNWVCIFLGCHAFGFYIHNDTMRALGRPQDMFSDKAIQLQPIFAQWIQNIHLLAPGTTAPNALATTSYAFGGEVVEVGGKIAMMPIQLGTADFMVHHIHAFTIHVTVLILLKGVLYARSSKLIPDKANLGFRFPCDGPGRGGTCQSSSWDHVFLGLFWMYNSISVVIFHFSWKMQSDVWGTISPDGSISHITGGNFAKGAITINGWLRDFLWSQASQVIQSYGSAASAYGLIFLGAHFIWAFSLMFLFSGRGYWQELIESIVWAHNKLNFAPAIQPRALSITQGRAVGLAHYLLGGIGTTWAFFLARAVSIS.

The next 8 membrane-spanning stretches (helical) occupy residues 73–96 (IFSAHFGQLSVIFLWISGMHFHGA), 159–182 (LYWIAIGGLAMSAIMLFAGWFHYH), 198–222 (MNHHLAGLLGLGCLSWSGHQIHVAL), 294–312 (IAHHHLALAVLFIFAGHMY), 349–372 (WHAQLAINLAMMGSLSIIVAHHMY), 388–414 (LSLFTHHMWIGGFCVTGGAAHAAIFMV), 436–458 (SIIAHLNWVCIFLGCHAFGFYIH), and 533–551 (FMVHHIHAFTIHVTVLILL). 2 residues coordinate [4Fe-4S] cluster: C575 and C584. 2 helical membrane-spanning segments follow: residues 591-612 (HVFLGLFWMYNSISVVIFHFSW) and 666-688 (ASAYGLIFLGAHFIWAFSLMFLF). A chlorophyll a'-binding site is contributed by H677. Chlorophyll a is bound by residues M685 and Y693. W694 provides a ligand contact to phylloquinone. Residues 726-746 (AVGLAHYLLGGIGTTWAFFLA) form a helical membrane-spanning segment.

It belongs to the PsaA/PsaB family. The PsaA/B heterodimer binds the P700 chlorophyll special pair and subsequent electron acceptors. PSI consists of a core antenna complex that captures photons, and an electron transfer chain that converts photonic excitation into a charge separation. The eukaryotic PSI reaction center is composed of at least 11 subunits. P700 is a chlorophyll a/chlorophyll a' dimer, A0 is one or more chlorophyll a, A1 is one or both phylloquinones and FX is a shared 4Fe-4S iron-sulfur center. serves as cofactor.

It is found in the plastid. It localises to the chloroplast thylakoid membrane. It carries out the reaction reduced [plastocyanin] + hnu + oxidized [2Fe-2S]-[ferredoxin] = oxidized [plastocyanin] + reduced [2Fe-2S]-[ferredoxin]. Its function is as follows. PsaA and PsaB bind P700, the primary electron donor of photosystem I (PSI), as well as the electron acceptors A0, A1 and FX. PSI is a plastocyanin/cytochrome c6-ferredoxin oxidoreductase, converting photonic excitation into a charge separation, which transfers an electron from the donor P700 chlorophyll pair to the spectroscopically characterized acceptors A0, A1, FX, FA and FB in turn. Oxidized P700 is reduced on the lumenal side of the thylakoid membrane by plastocyanin or cytochrome c6. This Phaeodactylum tricornutum (strain CCAP 1055/1) protein is Photosystem I P700 chlorophyll a apoprotein A1.